The chain runs to 375 residues: Leucoanthocyanidin dioxygenase 1 (375 aa).

Residues L218–P317 enclose the Fe2OG dioxygenase domain. Fe cation-binding residues include H242, D244, and H298. Residue R308 coordinates 2-oxoglutarate.

This sequence belongs to the iron/ascorbate-dependent oxidoreductase family. The cofactor is L-ascorbate. Fe(2+) serves as cofactor.

It catalyses the reaction a (2R,3S,4S)-leucoanthocyanidin + 2-oxoglutarate + O2 = a 4-H-anthocyanidin with a 3-hydroxy group + succinate + CO2 + 2 H2O. It functions in the pathway pigment biosynthesis; anthocyanin biosynthesis. In terms of biological role, involved in anthocyanin and protoanthocyanidin biosynthesis by catalyzing the oxidation of leucoanthocyanidins into anthocyanidins. Is able to synthesize anthocyanin pigments from leucoanthocyanidins in aleurone tissue. Converts dihydroquercetin to quercetin in vitro. This is Leucoanthocyanidin dioxygenase 1 from Oryza sativa subsp. indica (Rice).